Consider the following 83-residue polypeptide: Small ribosomal subunit protein uS17 (83 aa).

It belongs to the universal ribosomal protein uS17 family. In terms of assembly, part of the 30S ribosomal subunit.

In terms of biological role, one of the primary rRNA binding proteins, it binds specifically to the 5'-end of 16S ribosomal RNA. The polypeptide is Small ribosomal subunit protein uS17 (Thermodesulfovibrio yellowstonii (strain ATCC 51303 / DSM 11347 / YP87)).